The sequence spans 626 residues: Basic helix-loop-helix ARNT-like protein 1 (626 aa).

Residues 1–58 (MADQRMDISSTISDFMSPGPTDLLSSSLGTSGVDCNRKRKGSATDYQESMDTDKDDPH) form a disordered region. The residue at position 17 (Ser17) is a Phosphoserine; by GSK3-beta. The span at 17-32 (SPGPTDLLSSSLGTSG) shows a compositional bias: low complexity. At Thr21 the chain carries Phosphothreonine; by GSK3-beta. The short motif at 36 to 41 (NRKRKG) is the Nuclear localization signal element. Residues 72-125 (NAREAHSQIEKRRRDKMNSFIDELASLVPTCNAMSRKLDKLTVLRMAVQHMKTL) enclose the bHLH domain. Phosphoserine is present on Ser78. Ser90 carries the post-translational modification Phosphoserine; by CK2. Residues 142–152 (LSDDELKHLIL) carry the Nuclear export signal 1 motif. In terms of domain architecture, PAS 1 spans 143–215 (SDDELKHLIL…EQLSSSDTAP (73 aa)). Residue Lys252 forms a Glycyl lysine isopeptide (Lys-Gly) (interchain with G-Cter in SUMO2 and SUMO3) linkage. Residue Lys259 forms a Glycyl lysine isopeptide (Lys-Gly) (interchain with G-Cter in SUMO); alternate linkage. A Glycyl lysine isopeptide (Lys-Gly) (interchain with G-Cter in SUMO2); alternate cross-link involves residue Lys259. The 71-residue stretch at 326-396 (PQPVNGEIRV…ECHRQVLQTR (71 aa)) folds into the PAS 2 domain. Positions 361–369 (LAYLPQELL) match the Nuclear export signal 2 motif. A PAC domain is found at 401-444 (TNCYKFKIKDGSFITLRSRWFSFMNPWTKEVEYIVSTNTVVLAN). Disordered regions lie at residues 459–492 (SPHS…RAGA) and 511–595 (GSSP…SPSN). The tract at residues 508 to 588 (RIRGSSPSSC…IGIDMIDNDQ (81 aa)) is interaction with CIART. Residues 511–521 (GSSPSSCGSSP) show a composition bias toward low complexity. N6-acetyllysine is present on Lys538.

In terms of assembly, component of the circadian clock oscillator which includes the CRY1/2 proteins, CLOCK or NPAS2, BMAL1 or BMAL2, CSNK1D and/or CSNK1E, TIMELESS and the PER1/2/3 proteins. Forms a heterodimer with CLOCK. The CLOCK-BMAL1 heterodimer is required for E-box-dependent transactivation, for CLOCK nuclear translocation and degradation, and, for phosphorylation of both CLOCK and BMAL1. Part of a nuclear complex which also includes RACK1 and PRKCA; RACK1 and PRKCA are recruited to the complex in a circadian manner. Interacts with NPAS2. Interacts with EZH2. Interacts with SUMO3. Interacts with SIRT1. Interacts with AHR. Interacts with ID1, ID2 and ID3. Interacts with DDX4. Interacts with OGT. Interacts with EED and SUZ12. Interacts with MTA1. Interacts with CIART. Interacts with HSP90. Interacts with KAT2B and EP300. Interacts with BHLHE40/DEC1 and BHLHE41/DEC2. Interacts with RELB and the interaction is enhanced in the presence of CLOCK. Interacts with PER1, PER2, CRY1 and CRY2 and this interaction requires a translocation to the nucleus. Interaction of the CLOCK-BMAL1 heterodimer with PER or CRY inhibits transcription activation. Interaction of the CLOCK-BMAL1 with CRY1 is independent of DNA but with PER2 is off DNA. The CLOCK-BMAL1 heterodimer interacts with GSK3B. Interacts with KDM5A. Interacts with KMT2A; in a circadian manner. Interacts with UBE3A. Interacts with PRKCG. Interacts with MAGEL2. Interacts with NCOA2. Interacts with THRAP3. The CLOCK-BMAL1 heterodimer interacts with PASD1. Interacts with PASD1. Interacts with USP9X. Interacts with PIWIL2 (via PIWI domain). Interacts with HDAC3. Interacts with HNF4A. Post-translationally, ubiquitinated, leading to its proteasomal degradation. Deubiquitinated by USP9X. O-glycosylated; contains O-GlcNAc. O-glycosylation by OGT prevents protein degradation by inhibiting ubiquitination. It also stabilizes the CLOCK-BMAL1 heterodimer thereby increasing CLOCK-BMAL1-mediated transcription of genes in the negative loop of the circadian clock such as PER1/2/3 and CRY1/2. In terms of processing, acetylated on Lys-538 by CLOCK during the repression phase of the circadian cycle. Acetylation facilitates recruitment of CRY1 protein and initiates the repression phase of the circadian cycle. Acetylated at Lys-538 by KAT5 during the activation phase of the cycle, leading to recruitment of the positive transcription elongation factor b (P-TEFb) and BRD4, followed by productive elongation of circadian transcripts. Deacetylated by SIRT1, which may result in decreased protein stability. Post-translationally, phosphorylated upon dimerization with CLOCK. Phosphorylation enhances the transcriptional activity, alters the subcellular localization and decreases the stability of the CLOCK-BMAL1 heterodimer by promoting its degradation. Phosphorylation shows circadian variations in the liver with a peak between CT10 to CT14. Phosphorylation at Ser-90 by CK2 is essential for its nuclear localization, its interaction with CLOCK and controls CLOCK nuclear entry. Dephosphorylation at Ser-78 is important for dimerization with CLOCK and transcriptional activity. Sumoylated on Lys-259 upon dimerization with CLOCK. Predominantly conjugated to poly-SUMO2/3 rather than SUMO1 and the level of these conjugates undergo rhythmic variation, peaking at CT9-CT12. Sumoylation localizes it exclusively to the PML body and promotes its ubiquitination in the PML body, ubiquitin-dependent proteasomal degradation and the transcriptional activity of the CLOCK-BMAL1 heterodimer. In terms of processing, undergoes lysosome-mediated degradation in a time-dependent manner in the liver.

It localises to the nucleus. It is found in the cytoplasm. The protein resides in the PML body. Its function is as follows. Transcriptional activator which forms a core component of the circadian clock. The circadian clock, an internal time-keeping system, regulates various physiological processes through the generation of approximately 24 hour circadian rhythms in gene expression, which are translated into rhythms in metabolism and behavior. It is derived from the Latin roots 'circa' (about) and 'diem' (day) and acts as an important regulator of a wide array of physiological functions including metabolism, sleep, body temperature, blood pressure, endocrine, immune, cardiovascular, and renal function. Consists of two major components: the central clock, residing in the suprachiasmatic nucleus (SCN) of the brain, and the peripheral clocks that are present in nearly every tissue and organ system. Both the central and peripheral clocks can be reset by environmental cues, also known as Zeitgebers (German for 'timegivers'). The predominant Zeitgeber for the central clock is light, which is sensed by retina and signals directly to the SCN. The central clock entrains the peripheral clocks through neuronal and hormonal signals, body temperature and feeding-related cues, aligning all clocks with the external light/dark cycle. Circadian rhythms allow an organism to achieve temporal homeostasis with its environment at the molecular level by regulating gene expression to create a peak of protein expression once every 24 hours to control when a particular physiological process is most active with respect to the solar day. Transcription and translation of core clock components (CLOCK, NPAS2, BMAL1, BMAL2, PER1, PER2, PER3, CRY1 and CRY2) plays a critical role in rhythm generation, whereas delays imposed by post-translational modifications (PTMs) are important for determining the period (tau) of the rhythms (tau refers to the period of a rhythm and is the length, in time, of one complete cycle). A diurnal rhythm is synchronized with the day/night cycle, while the ultradian and infradian rhythms have a period shorter and longer than 24 hours, respectively. Disruptions in the circadian rhythms contribute to the pathology of cardiovascular diseases, cancer, metabolic syndromes and aging. A transcription/translation feedback loop (TTFL) forms the core of the molecular circadian clock mechanism. Transcription factors, CLOCK or NPAS2 and BMAL1 or BMAL2, form the positive limb of the feedback loop, act in the form of a heterodimer and activate the transcription of core clock genes and clock-controlled genes (involved in key metabolic processes), harboring E-box elements (5'-CACGTG-3') within their promoters. The core clock genes: PER1/2/3 and CRY1/2 which are transcriptional repressors form the negative limb of the feedback loop and interact with the CLOCK|NPAS2-BMAL1|BMAL2 heterodimer inhibiting its activity and thereby negatively regulating their own expression. This heterodimer also activates nuclear receptors NR1D1/2 and RORA/B/G, which form a second feedback loop and which activate and repress BMAL1 transcription, respectively. BMAL1 positively regulates myogenesis and negatively regulates adipogenesis via the transcriptional control of the genes of the canonical Wnt signaling pathway. Plays a role in normal pancreatic beta-cell function; regulates glucose-stimulated insulin secretion via the regulation of antioxidant genes NFE2L2/NRF2 and its targets SESN2, PRDX3, CCLC and CCLM. Negatively regulates the mTORC1 signaling pathway; regulates the expression of MTOR and DEPTOR. Controls diurnal oscillations of Ly6C inflammatory monocytes; rhythmic recruitment of the PRC2 complex imparts diurnal variation to chemokine expression that is necessary to sustain Ly6C monocyte rhythms. Regulates the expression of HSD3B2, STAR, PTGS2, CYP11A1, CYP19A1 and LHCGR in the ovary and also the genes involved in hair growth. Plays an important role in adult hippocampal neurogenesis by regulating the timely entry of neural stem/progenitor cells (NSPCs) into the cell cycle and the number of cell divisions that take place prior to cell-cycle exit. Regulates the circadian expression of CIART and KLF11. The CLOCK-BMAL1 heterodimer regulates the circadian expression of SERPINE1/PAI1, VWF, B3, CCRN4L/NOC, NAMPT, DBP, MYOD1, PPARGC1A, PPARGC1B, SIRT1, GYS2, F7, NGFR, GNRHR, BHLHE40/DEC1, ATF4, MTA1, KLF10 and also genes implicated in glucose and lipid metabolism. Promotes rhythmic chromatin opening, regulating the DNA accessibility of other transcription factors. The NPAS2-BMAL1 heterodimer positively regulates the expression of MAOA, F7 and LDHA and modulates the circadian rhythm of daytime contrast sensitivity by regulating the rhythmic expression of adenylate cyclase type 1 (ADCY1) in the retina. The preferred binding motif for the CLOCK-BMAL1 heterodimer is 5'-CACGTGA-3', which contains a flanking adenine nucleotide at the 3-prime end of the canonical 6-nucleotide E-box sequence. CLOCK specifically binds to the half-site 5'-CAC-3', while BMAL1 binds to the half-site 5'-GTGA-3'. The CLOCK-BMAL1 heterodimer also recognizes the non-canonical E-box motifs 5'-AACGTGA-3' and 5'-CATGTGA-3'. Essential for the rhythmic interaction of CLOCK with ASS1 and plays a critical role in positively regulating CLOCK-mediated acetylation of ASS1. Plays a role in protecting against lethal sepsis by limiting the expression of immune checkpoint protein CD274 in macrophages in a PKM2-dependent manner. Regulates the diurnal rhythms of skeletal muscle metabolism via transcriptional activation of genes promoting triglyceride synthesis (DGAT2) and metabolic efficiency (COQ10B). This Mesocricetus auratus (Golden hamster) protein is Basic helix-loop-helix ARNT-like protein 1 (BMAL1).